The chain runs to 451 residues: Gamma-aminobutyric acid receptor subunit alpha-2 (451 aa).

Positions 1-28 (MKTKLNIYNMQLLLFVFLVWDPARLVLA) are cleaved as a signal peptide. Topologically, residues 29–249 (NIQEDEAKNN…MTAHFHLKRK (221 aa)) are extracellular. Residue Asn38 is glycosylated (N-linked (GlcNAc...) asparagine). 4-aminobutanoate is bound at residue Arg94. An N-linked (GlcNAc...) asparagine glycan is attached at Asn138. Thr157 contacts 4-aminobutanoate. Cys166 and Cys180 are joined by a disulfide. Residues 250–270 (IGYFVIQTYLPCIMTVILSQV) traverse the membrane as a helical segment. Topologically, residues 271 to 280 (SFWLNRESVP) are cytoplasmic. Residues 281–300 (ARTVFGVTTVLTMTTLSISA) form a helical membrane-spanning segment. Topologically, residues 301-311 (RNSLPKVAYAT) are extracellular. Residues 312-332 (AMDWFIAVCYAFVFSALIEFA) traverse the membrane as a helical segment. At 333–420 (TVNYFTKRGW…FNSVSKIDRM (88 aa)) the chain is on the cytoplasmic side. Residues 421–441 (SRIVFPVLFGTFNLVYWATYL) form a helical membrane-spanning segment. Residues 442 to 451 (NREPVLGVSP) lie on the Extracellular side of the membrane.

It belongs to the ligand-gated ion channel (TC 1.A.9) family. Gamma-aminobutyric acid receptor (TC 1.A.9.5) subfamily. GABRA2 sub-subfamily. As to quaternary structure, heteropentamer, formed by a combination of alpha (GABRA1-6), beta (GABRB1-3), gamma (GABRG1-3), delta (GABRD), epsilon (GABRE), rho (GABRR1-3), pi (GABRP) and theta (GABRQ) subunits, each subunit exhibiting distinct physiological and pharmacological properties. Interacts with UBQLN1. Interacts with KIF21B. Interacts with LHFPL4. Interacts with SHISA7; interaction leads to the regulation of GABA(A) receptor trafficking, channel deactivation kinetics and pharmacology. In terms of processing, glycosylated.

The protein resides in the postsynaptic cell membrane. Its subcellular location is the cell membrane. It localises to the cytoplasmic vesicle membrane. The protein localises to the cell projection. It is found in the dendrite. The enzyme catalyses chloride(in) = chloride(out). Its activity is regulated as follows. Activated by pentobarbital. Inhibited by the antagonist bicuculline. Functionally, alpha subunit of the heteropentameric ligand-gated chloride channel gated by gamma-aminobutyric acid (GABA), a major inhibitory neurotransmitter in the brain. GABA-gated chloride channels, also named GABA(A) receptors (GABAAR), consist of five subunits arranged around a central pore and contain GABA active binding site(s) located at the alpha and beta subunit interface(s). When activated by GABA, GABAARs selectively allow the flow of chloride anions across the cell membrane down their electrochemical gradient. Chloride influx into the postsynaptic neuron following GABAAR opening decreases the neuron ability to generate a new action potential, thereby reducing nerve transmission. The alpha-2 subunit exhibits synaptogenic activity together with beta-2 and very little to no activity together with beta-3, the gamma-2 subunit being necessary but not sufficient to induce rapid synaptic contacts formation. This is Gamma-aminobutyric acid receptor subunit alpha-2 (GABRA2) from Pongo abelii (Sumatran orangutan).